The chain runs to 207 residues: uncharacterized protein (207 aa).

The signal sequence occupies residues 1–19; the sequence is MRFNVSFLLSLLLPTLAFA.

This sequence to P.multocida PM1509.

This is an uncharacterized protein from Pasteurella multocida (strain Pm70).